Consider the following 58-residue polypeptide: UPF0391 membrane protein COXBURSA331_A2131 (58 aa).

Helical transmembrane passes span 3 to 23 (FWVL…FTGI) and 30 to 50 (IAKI…IAML).

The protein belongs to the UPF0391 family.

The protein resides in the cell membrane. The protein is UPF0391 membrane protein COXBURSA331_A2131 of Coxiella burnetii (strain RSA 331 / Henzerling II).